The primary structure comprises 356 residues: Glutamine synthetase PR-1 (356 aa).

In terms of domain architecture, GS beta-grasp spans valine 19–glycine 99. Positions proline 41 to proline 64 are disordered. In terms of domain architecture, GS catalytic spans lysine 106–proline 356.

It belongs to the glutamine synthetase family. Homooctamer. As to expression, roots.

Its subcellular location is the cytoplasm. The catalysed reaction is L-glutamate + NH4(+) + ATP = L-glutamine + ADP + phosphate + H(+). The chain is Glutamine synthetase PR-1 from Phaseolus vulgaris (Kidney bean).